A 534-amino-acid chain; its full sequence is ATP synthase subunit alpha 2 (534 aa).

Gly-175–Thr-182 contributes to the ATP binding site. Positions Phe-506–Ser-534 are disordered. Basic and acidic residues predominate over residues Thr-514–Pro-524.

This sequence belongs to the ATPase alpha/beta chains family. In terms of assembly, F-type ATPases have 2 components, CF(1) - the catalytic core - and CF(0) - the membrane proton channel. CF(1) has five subunits: alpha(3), beta(3), gamma(1), delta(1), epsilon(1). CF(0) has three main subunits: a(1), b(2) and c(9-12). The alpha and beta chains form an alternating ring which encloses part of the gamma chain. CF(1) is attached to CF(0) by a central stalk formed by the gamma and epsilon chains, while a peripheral stalk is formed by the delta and b chains.

Its subcellular location is the cell inner membrane. It carries out the reaction ATP + H2O + 4 H(+)(in) = ADP + phosphate + 5 H(+)(out). Produces ATP from ADP in the presence of a proton gradient across the membrane. The alpha chain is a regulatory subunit. The chain is ATP synthase subunit alpha 2 from Albidiferax ferrireducens (strain ATCC BAA-621 / DSM 15236 / T118) (Rhodoferax ferrireducens).